The following is a 291-amino-acid chain: Elongation factor Ts (291 aa).

The interval 79–82 (TDFV) is involved in Mg(2+) ion dislocation from EF-Tu.

This sequence belongs to the EF-Ts family.

The protein localises to the cytoplasm. Its function is as follows. Associates with the EF-Tu.GDP complex and induces the exchange of GDP to GTP. It remains bound to the aminoacyl-tRNA.EF-Tu.GTP complex up to the GTP hydrolysis stage on the ribosome. This chain is Elongation factor Ts, found in Stenotrophomonas maltophilia (strain K279a).